The chain runs to 168 residues: UPF0303 protein YE1367 (168 aa).

Belongs to the UPF0303 family.

In Yersinia enterocolitica serotype O:8 / biotype 1B (strain NCTC 13174 / 8081), this protein is UPF0303 protein YE1367.